Consider the following 1373-residue polypeptide: MQGNTCHRMSYHPGRGCPRGRGGHGARPSAPAFRPQNLRLLHPQQPPAQYQYEPPSAPSSSYSNSQAPSFMPPRPDFVPYPPPAAPSAQGPLPPCPVRPPYPNHQMRHPFPVPPCFPPMPPPMPCPNNPPASGAPPGQGTFPFMVPPPSMPHPPPPPVMPQQVNYQYPPGYSHSFPPPGFNSYQNNSSSFPPSANSSSTPHFRHLPPYSLPKAQNERRSPERLKHYDDHRHRDHSHGRGERHRSLERRERGRSPERRRPESRYRSDYDRGRTPPPRHRSYERSRERDRERHRHREARRSPSLERSYKKEYKRSGRSYALPVAPEPAGCTPELPGEMIKTTESWAPPPENVNHRSPSREKKRARWEEEKDRWSDSQGSGKEKNYTSIKEKEAEEVPPEKTEEEEEELLKPVWIRCTHSESYYSSDPMDQVGDSTVVGTSRLRDLYDKFEEELGNRQEKAKAARPPWEPPKTKLDEDLESSSESECETDDDSTCSSSSDSEVFDVIAEIKRKKAHPDRLHDELWYNDPGQMNDGPLCKCSAKARRTGIRHSIYPGEEAIKPCRPMTNNAGRLFHYRITVSPPTNFLTDRPTVIEYDDHEYIFEGFSMFAHAPLTNIPLCKVIRFNIDYTIHFIEEMMPENFCVKGLELFSLFLFRDILELYDWNLKGPLFEDSPPCCPRFHFMPRFVRFLPDGGKEVLSMHQILLYLLRCSKALVPEEEIANMLQWEELEWQKYAEECKGMIVTNPGTKPSSVRIDQLDREQFNPEVITFPIIVHFGIRPAQLSYAGDPQYQKLWKSYVKLRHLLANSPKVKQTDKQKLAQREEALQKIRQKNTMRREVTVELSSQGFWKTGIRSDVCQHAMMLPVLTHHIRYHQCLMHLDKLIGYTFQDRCLLQLAMTHPSHHLNFGMNPDHARNSLSNCGIRQPKYGDRKVHHMHMRKKGINTLINIMSRLGQDDPTPSRINHNERLEFLGDAVVEFLTSVHLYYLFPSLEEGGLATYRTAIVQNQHLAMLAKKLELDRFMLYAHGPDLCRESDLRHAMANCFEALIGAVYLEGSLEEAKQLFGRLLFNDPDLREVWLNYPLHPLQLQEPNTDRQLIETSPVLQKLTEFEEAIGVIFTHVRLLARAFTLRTVGFNHLTLGHNQRMEFLGDSIMQLVATEYLFIHFPDHHEGHLTLLRSSLVNNRTQAKVAEELGMQEYAITNDKTKRPVALRTKTLADLLESFIAALYIDKDLEYVHTFMNVCFFPRLKEFILNQDWNDPKSQLQQCCLTLRTEGKEPDIPLYKTLQTVGPSHARTYTVAVYFKGERIGCGKGPSIQQAEMGAAMDALEKYNFPQMAHQKRFIERKYRQELKEMRWEREHQEREPEEAEDIKK.

3 disordered regions span residues 1 to 99, 119 to 406, and 447 to 496; these read MQGN…PVRP, MPPP…EEEL, and FEEE…SSSS. Residues 47–69 are compositionally biased toward low complexity; sequence PAQYQYEPPSAPSSSYSNSQAPS. Pro residues-rich tracts occupy residues 70-99, 119-133, and 144-159; these read FMPP…PVRP, MPPP…PASG, and MVPP…PPVM. Low complexity-rich tracts occupy residues 160 to 169 and 185 to 200; these read PQQVNYQYPP and NNSS…SSTP. Composition is skewed to basic and acidic residues over residues 214–271, 278–288, and 297–312; these read QNER…DRGR, RSYERSRERDR, and RRSP…EYKR. Ser-354 and Ser-372 each carry phosphoserine. 2 stretches are compositionally biased toward basic and acidic residues: residues 363-398 and 447-459; these read RWEE…PPEK and FEEE…EKAK. Positions 389-1364 are necessary for interaction with DGCR8 and pri-miRNA processing activity; it reads KEAEEVPPEK…RWEREHQERE (976 aa). A compositionally biased stretch (acidic residues) spans 474–490; the sequence is EDLESSSESECETDDDS. The Zn(2+) site is built by Cys-535, Cys-537, His-548, Cys-560, His-608, Cys-675, and His-679. RNase III domains are found at residues 875-1055 and 1106-1232; these read LMHL…LEGS and LTEF…IDKD. A Mg(2+)-binding site is contributed by Glu-968. A Zn(2+)-binding site is contributed by His-1025. Mg(2+) is bound by residues Asn-1041, Glu-1044, Glu-1146, Asp-1218, and Glu-1221. Residues 1259-1333 enclose the DRBM domain; sequence DPKSQLQQCC…AMDALEKYNF (75 aa).

This sequence belongs to the ribonuclease III family. As to quaternary structure, component of the microprocessor complex, or pri-miRNA processing protein complex, which is composed of DROSHA and DGCR8. The microprocessor complex is a heterotrimer; each of the two DROSHA RNase III domains binds one DGCR8 (via C-terminal region). Interacts with SP1 and SNIP1. Interacts with SRRT/ARS2. Interacts with CPSF3 and ISY1; this interaction is in an RNA dependent manner. Interacts with PUS10; interaction promotes pri-miRNAs processing. Mg(2+) is required as a cofactor. It depends on Mn(2+) as a cofactor. Degraded by autophagy in response to neuronal activity in motor neurons. As to expression, expressed in motor neurons (at protein level).

It localises to the nucleus. The protein resides in the nucleolus. It is found in the cytoplasm. It carries out the reaction Endonucleolytic cleavage to 5'-phosphomonoester.. In terms of biological role, ribonuclease III double-stranded (ds) RNA-specific endoribonuclease that is involved in the initial step of microRNA (miRNA) biogenesis. Component of the microprocessor complex that is required to process primary miRNA transcripts (pri-miRNAs) to release precursor miRNA (pre-miRNA) in the nucleus. Within the microprocessor complex, DROSHA cleaves the 3' and 5' strands of a stem-loop in pri-miRNAs (processing center 11 bp from the dsRNA-ssRNA junction) to release hairpin-shaped pre-miRNAs that are subsequently cut by the cytoplasmic DICER to generate mature miRNAs. Involved also in pre-rRNA processing. Cleaves double-strand RNA and does not cleave single-strand RNA. Involved in the formation of GW bodies. Plays a role in growth homeostasis in response to autophagy in motor neurons. The polypeptide is Ribonuclease 3 (Drosha) (Mus musculus (Mouse)).